A 287-amino-acid polypeptide reads, in one-letter code: ATP synthase gamma chain (287 aa).

Belongs to the ATPase gamma chain family. In terms of assembly, F-type ATPases have 2 components, CF(1) - the catalytic core - and CF(0) - the membrane proton channel. CF(1) has five subunits: alpha(3), beta(3), gamma(1), delta(1), epsilon(1). CF(0) has three main subunits: a, b and c.

It is found in the cell inner membrane. Produces ATP from ADP in the presence of a proton gradient across the membrane. The gamma chain is believed to be important in regulating ATPase activity and the flow of protons through the CF(0) complex. This chain is ATP synthase gamma chain, found in Geotalea uraniireducens (strain Rf4) (Geobacter uraniireducens).